Here is a 990-residue protein sequence, read N- to C-terminus: MRSFIKSHRKSNSLESDSDIDFKQLKRKNASTSQLSPPRYNTDYYDPVTSSPKTPTHSHTTSDSLPQKHSPGFESLHRLFNNKLFKKASNSSLNSYLANTDSQSRRSSKDQDPLAPSFHVLKTSSNPASQDSELPVIKGVITHTWGNHSKHNDPHVIVLNDPKTSFETLRSSDLEPPPRLTSKTTRSSVSSERSWSTRDHSMSPPLTSINQDIDIPEDMATRSKNTLINKKKMENRQARIHSNDDLIAMRKNSSDTLPQTAEFFASDKLPGDSTPILEIPESPPPVITLEKYNSSLSDAKELSRSKNVRSNRTSVVSMTQSEESRWSNHLMVNSNHNQNKLRDSDDSDYSNAIDEEDDDDADDDDEASQFSFEYSNLSGRTPSVKYYSKPEPKQMVYIDDLYDDEDFDEDMNYYDENEVSEFLQEEMASNKNNINTDTSVLKDLSSPSINDHSNEKPIYKPTIQMRVNKPKVHRYNDLFALSDEDDPSFNDDDEFDEDEEEGGDDNDEEDEIDEEYDQKVSDECGQSIELQSDDIHSDYGVEYYNDFGGDLNLQNDVQKHHINKEQQYISDEEFDDAITDFNMAKHIIEEEVVLDKAEALRYQKDAEPVQSKTSEDVVNYVDEDSNLRINEKLEKGDVTYQKPTLLTEVKNKQFQKKPVASFADIFNLESDSEEDINNEDGLTGLSDVGLDEDDAVSSPILQSPFESQSLAEGLVSPVICTPGKPNIINKQIIPTIKCEPSSPQEKTIENNKSHTASNFKEYGLNHPLPPPARSQALKFHDLNSELDSELPALMSNLYFIDETEEDAYNELNDVTRDEDEYLDEINTVPEDFNFSDTENDNNAAKRMLRRSNKGSFRSTYSFTDKPQGVTTESSPIKNKLEVNNKTVTFFSSPGWSKSPGSEIGMQRSKSPVKPSSGYRPFGQGSKQFPITPSHEPNYSIEEDRIASTDEILESRTPPTTYMAPSPAFIPNYSLSPIQEASSSVTNSPKR.

Positions 1-11 (MRSFIKSHRKS) are enriched in basic residues. Disordered stretches follow at residues 1-73 (MRSF…SPGF), 97-134 (LANT…DSEL), 168-211 (TLRS…SINQ), 297-366 (SDAK…DDDE), 480-520 (ALSD…DQKV), 856-876 (FRST…SSPI), 893-937 (PGWS…HEPN), and 955-990 (RTPP…SPKR). Over residues 49 to 64 (TSSPKTPTHSHTTSDS) the composition is skewed to low complexity. The segment covering 103–112 (QSRRSSKDQD) has biased composition (basic and acidic residues). The span at 122–132 (KTSSNPASQDS) shows a compositional bias: polar residues. Residues 180 to 194 (LTSKTTRSSVSSERS) show a composition bias toward low complexity. The segment covering 308–321 (VRSNRTSVVSMTQS) has biased composition (polar residues). 2 stretches are compositionally biased toward acidic residues: residues 345–366 (DDSD…DDDE) and 482–516 (SDED…DEEY). Polar residues-rich tracts occupy residues 924–936 (GSKQ…SHEP) and 972–990 (YSLS…SPKR).

This sequence belongs to the ZRG8 family.

The protein resides in the cytoplasm. The protein localises to the bud. It is found in the bud neck. Its subcellular location is the bud tip. In terms of biological role, involved in maintenance of polarized growth and daughter-cell-specific transcription. The polypeptide is Zinc-regulated protein 8 (ZRG8) (Candida glabrata (strain ATCC 2001 / BCRC 20586 / JCM 3761 / NBRC 0622 / NRRL Y-65 / CBS 138) (Yeast)).